A 277-amino-acid polypeptide reads, in one-letter code: Protein OPG166 (277 aa).

Residues Asn-29 and Asn-58 are each glycosylated (N-linked (GlcNAc...) asparagine; by host). The next 5 helical transmembrane spans lie at 124–144 (TMLM…EIAY), 156–176 (GILQ…AFLF), 186–206 (IIGL…KVFS), 219–239 (LIIY…GLSL), and 247–267 (LLLS…LFLV).

It belongs to the orthopoxvirus OPG166 protein family.

The protein localises to the host membrane. Promotes, when overexpressed, the influx of extracellular Ca(2+), leading to membrane permeability and host cell necrosis. This chain is Protein OPG166 (OPG166), found in Cynomys gunnisoni (Gunnison's prairie dog).